Reading from the N-terminus, the 315-residue chain is MNPNFLDFEQPIADLQAKIEELRLVGNDNSLNIGDEISRLQDKSKTLTESIFGNLTSWQIARMARHPRRPYTLDYIENIFTEFDELHGDRHFSDDAAIVGGIARLDNQPVMIIGHQKGREVREKVRRNFGMPRPEGYRKACRLMEMAERFKMPILTFIDTPGAYPGIDAEERNQSEAIAWNLRVMARLKTPIIATVIGEGGSGGALAIGVCDQLNMLQYSTYAVISPEGCASILWKTAEKAPDAAEAMGITADRLKGLGIVDKVIAEPLGGAHRDPVAAAALIREELSSQLAMLKAFDNDALLARRYDRLMSYGL.

The 254-residue stretch at Leu-40–Met-293 folds into the CoA carboxyltransferase C-terminal domain.

The protein belongs to the AccA family. Acetyl-CoA carboxylase is a heterohexamer composed of biotin carboxyl carrier protein (AccB), biotin carboxylase (AccC) and two subunits each of ACCase subunit alpha (AccA) and ACCase subunit beta (AccD).

It is found in the cytoplasm. The catalysed reaction is N(6)-carboxybiotinyl-L-lysyl-[protein] + acetyl-CoA = N(6)-biotinyl-L-lysyl-[protein] + malonyl-CoA. It participates in lipid metabolism; malonyl-CoA biosynthesis; malonyl-CoA from acetyl-CoA: step 1/1. Its function is as follows. Component of the acetyl coenzyme A carboxylase (ACC) complex. First, biotin carboxylase catalyzes the carboxylation of biotin on its carrier protein (BCCP) and then the CO(2) group is transferred by the carboxyltransferase to acetyl-CoA to form malonyl-CoA. In Pseudomonas syringae pv. tomato (strain ATCC BAA-871 / DC3000), this protein is Acetyl-coenzyme A carboxylase carboxyl transferase subunit alpha.